Reading from the N-terminus, the 561-residue chain is Sesquiterpene synthase 2 (561 aa).

Residues Asp-313, Asp-317, Asp-458, and Glu-466 each coordinate Mg(2+). Positions 313 to 317 (DDIYD) match the DDXXD motif motif.

It belongs to the terpene synthase family. Tpsa subfamily. The cofactor is Mn(2+). Mg(2+) serves as cofactor.

It localises to the cytoplasm. The catalysed reaction is (2E,6E)-farnesyl diphosphate + H2O = kunzeaol + diphosphate. Its pathway is secondary metabolite biosynthesis; terpenoid biosynthesis. Its function is as follows. Involved in the biosynthesis of kunzeaol. Produces mainly (-)-germacrene D along with gamma-cadinene. This is Sesquiterpene synthase 2 (STS2) from Thapsia garganica (Deadly carrot).